The primary structure comprises 536 residues: DNA damage-binding protein CMR1 (536 aa).

The segment covering 36–45 (REAGVDDTHR) has biased composition (basic and acidic residues). A disordered region spans residues 36–72 (REAGVDDTHRTVVKKKKSPSVSRGRSASPKVAPVATR). WD repeat units lie at residues 195-236 (LVYE…LSEN), 251-291 (FFTK…SNDI), 346-386 (LSDK…KKPE), 403-442 (DSRL…LPDD), 456-495 (GRWT…LAHL), and 496-535 (PTAT…KEEE).

This sequence belongs to the WD repeat DDB2/WDR76 family.

In terms of biological role, DNA-binding protein that binds to both single- and double-stranded DNA. Binds preferentially to UV-damaged DNA. May be involved in DNA-metabolic processes. The protein is DNA damage-binding protein CMR1 of Vanderwaltozyma polyspora (strain ATCC 22028 / DSM 70294 / BCRC 21397 / CBS 2163 / NBRC 10782 / NRRL Y-8283 / UCD 57-17) (Kluyveromyces polysporus).